Here is a 387-residue protein sequence, read N- to C-terminus: Protein RecA (387 aa).

Residue G78–T85 participates in ATP binding. Positions K355–S369 are enriched in basic and acidic residues. Residues K355–E387 are disordered.

This sequence belongs to the RecA family.

It is found in the cytoplasm. Its function is as follows. Can catalyze the hydrolysis of ATP in the presence of single-stranded DNA, the ATP-dependent uptake of single-stranded DNA by duplex DNA, and the ATP-dependent hybridization of homologous single-stranded DNAs. It interacts with LexA causing its activation and leading to its autocatalytic cleavage. This is Protein RecA from Leptospira biflexa serovar Patoc (strain Patoc 1 / ATCC 23582 / Paris).